The primary structure comprises 274 residues: Large ribosomal subunit protein uL2cz/uL2cy (274 aa).

Disordered regions lie at residues 1–33 and 223–265; these read MAIH…LIYG and MNPV…KYND.

It belongs to the universal ribosomal protein uL2 family. In terms of assembly, part of the 50S ribosomal subunit.

It is found in the plastid. Its subcellular location is the chloroplast. In Pelargonium hortorum (Common geranium), this protein is Large ribosomal subunit protein uL2cz/uL2cy (rpl2-A).